The chain runs to 51 residues: Insulin (51 aa).

3 cysteine pairs are disulfide-bonded: Cys-7/Cys-37, Cys-19/Cys-50, and Cys-36/Cys-41.

It belongs to the insulin family. Heterodimer of a B chain and an A chain linked by two disulfide bonds.

The protein localises to the secreted. Its function is as follows. Insulin decreases blood glucose concentration. It increases cell permeability to monosaccharides, amino acids and fatty acids. It accelerates glycolysis, the pentose phosphate cycle, and glycogen synthesis in liver. In Hystrix cristata (North African crested porcupine), this protein is Insulin (INS).